A 109-amino-acid chain; its full sequence is Nucleoid-associated protein Ssed_2851 (109 aa).

Belongs to the YbaB/EbfC family. As to quaternary structure, homodimer.

The protein localises to the cytoplasm. It localises to the nucleoid. Functionally, binds to DNA and alters its conformation. May be involved in regulation of gene expression, nucleoid organization and DNA protection. The chain is Nucleoid-associated protein Ssed_2851 from Shewanella sediminis (strain HAW-EB3).